The following is a 221-amino-acid chain: Cysteine protease inhibitor 8 (221 aa).

The signal sequence occupies residues 1 to 26 (IPSINILSFLLLSSTLSLVAFARSFT). Positions 27-42 (SENPIVLPTTCHDDDN) are excised as a propeptide. The Vacuolar targeting signal motif lies at 29-34 (NPIVLP). Cystine bridges form between Cys84-Cys136 and Cys184-Cys190.

Belongs to the protease inhibitor I3 (leguminous Kunitz-type inhibitor) family.

The protein localises to the vacuole. Inhibitor of cysteine proteases. May protect the plant by inhibiting proteases of invading organisms. In Solanum tuberosum (Potato), this protein is Cysteine protease inhibitor 8.